Here is a 367-residue protein sequence, read N- to C-terminus: Uracil nucleotide/cysteinyl leukotriene receptor (367 aa).

The segment at 1–28 (MSKRSWWAGSRKPPREMLKLSGSDSSQS) is disordered. Residues 1–64 (MSKRSWWAGS…TPLENMLFAS (64 aa)) are Extracellular-facing. N42 carries an N-linked (GlcNAc...) asparagine glycan. Residues 65–85 (FYLLDFILALVGNTLALWLFI) form a helical membrane-spanning segment. At 86 to 92 (RDHKSGT) the chain is on the cytoplasmic side. The chain crosses the membrane as a helical span at residues 93–113 (PANVFLMHLAVADLSCVLVLP). Over 114 to 133 (TRLVYHFSGNHWPFGEIACR) the chain is Extracellular. C132 and C209 are oxidised to a cystine. Residues 134-154 (LTGFLFYLNMYASIYFLTCIS) traverse the membrane as a helical segment. At 155 to 175 (ADRFLAIVHPVKSLKLRRPLY) the chain is on the cytoplasmic side. The helical transmembrane segment at 176-196 (AHLACAFLWVVVAVAMAPLLV) threads the bilayer. The Extracellular segment spans residues 197-223 (SPQTVQTNHTVVCLQLYREKASHHALV). A glycan (N-linked (GlcNAc...) asparagine) is linked at N204. A helical membrane pass occupies residues 224 to 244 (SLAVAFTFPFITTVTCYLLII). At 245–260 (RSLRQGLRVEKRLKTK) the chain is on the cytoplasmic side. Residues 261-281 (AVRMIAIVLAIFLVCFVPYHV) traverse the membrane as a helical segment. The N-linked (GlcNAc...) asparagine glycan is linked to N282. The Extracellular portion of the chain corresponds to 282-308 (NRSVYVLHYRSHGASCATQRILALANR). A helical membrane pass occupies residues 309–329 (ITSCLTSLNGALDPIMYFFVA). The Cytoplasmic segment spans residues 330 to 367 (EKFRHALCNLLCGKRLKGPPPSFEGKTNESSLSAKSEL).

It belongs to the G-protein coupled receptor 1 family. As to expression, expressed in brain, kidney, heart and umbilical vein endothelial cells. Highest level in brain.

It localises to the cell membrane. Dual specificity receptor for uracil nucleotides and cysteinyl leukotrienes (CysLTs). Signals through G(i) and inhibition of adenylyl cyclase. May mediate brain damage by nucleotides and CysLTs following ischemia. The chain is Uracil nucleotide/cysteinyl leukotriene receptor (GPR17) from Homo sapiens (Human).